We begin with the raw amino-acid sequence, 100 residues long: uncharacterized protein (100 aa).

This is an uncharacterized protein from Acidianus convivator (ATV).